The chain runs to 439 residues: Dihydroorotase (439 aa).

Zn(2+)-binding residues include His-73 and His-75. Residues 75 to 77 (HLR) and Asn-107 each bind substrate. Residues Asp-165, His-192, and His-245 each coordinate Zn(2+). Asn-291 contributes to the substrate binding site. A Zn(2+)-binding site is contributed by Asp-318. Residue Asp-318 is part of the active site. Substrate is bound at residue His-322.

It belongs to the metallo-dependent hydrolases superfamily. DHOase family. Class I DHOase subfamily. The cofactor is Zn(2+).

The catalysed reaction is (S)-dihydroorotate + H2O = N-carbamoyl-L-aspartate + H(+). Its pathway is pyrimidine metabolism; UMP biosynthesis via de novo pathway; (S)-dihydroorotate from bicarbonate: step 3/3. Functionally, catalyzes the reversible cyclization of carbamoyl aspartate to dihydroorotate. The protein is Dihydroorotase of Syntrophobacter fumaroxidans (strain DSM 10017 / MPOB).